The chain runs to 165 residues: Phosphopantetheine adenylyltransferase (165 aa).

Residue T10 coordinates substrate. Residues 10 to 11 (TF) and H18 contribute to the ATP site. Substrate is bound by residues K42, L75, and R89. ATP-binding positions include 90–92 (GVR), E100, and 125–131 (YTYVAST).

Belongs to the bacterial CoaD family. In terms of assembly, homohexamer. It depends on Mg(2+) as a cofactor.

The protein localises to the cytoplasm. The enzyme catalyses (R)-4'-phosphopantetheine + ATP + H(+) = 3'-dephospho-CoA + diphosphate. It participates in cofactor biosynthesis; coenzyme A biosynthesis; CoA from (R)-pantothenate: step 4/5. Its function is as follows. Reversibly transfers an adenylyl group from ATP to 4'-phosphopantetheine, yielding dephospho-CoA (dPCoA) and pyrophosphate. The polypeptide is Phosphopantetheine adenylyltransferase (Chlorobaculum tepidum (strain ATCC 49652 / DSM 12025 / NBRC 103806 / TLS) (Chlorobium tepidum)).